Consider the following 347-residue polypeptide: NADH-quinone oxidoreductase subunit H (347 aa).

9 helical membrane passes run 13 to 33 (LIIA…VAYL), 50 to 70 (PNVV…KFVF), 82 to 102 (GVFL…WAVI), 115 to 135 (VGIL…IMGG), 161 to 181 (IGFV…TDIV), 198 to 218 (FLDW…ISAL), 248 to 268 (FLLF…LMTV), 286 to 306 (VPGI…FAMV), and 325 to 345 (VFLP…KVFG).

It belongs to the complex I subunit 1 family. In terms of assembly, NDH-1 is composed of 14 different subunits. Subunits NuoA, H, J, K, L, M, N constitute the membrane sector of the complex.

The protein localises to the cell inner membrane. The catalysed reaction is a quinone + NADH + 5 H(+)(in) = a quinol + NAD(+) + 4 H(+)(out). Its function is as follows. NDH-1 shuttles electrons from NADH, via FMN and iron-sulfur (Fe-S) centers, to quinones in the respiratory chain. The immediate electron acceptor for the enzyme in this species is believed to be ubiquinone. Couples the redox reaction to proton translocation (for every two electrons transferred, four hydrogen ions are translocated across the cytoplasmic membrane), and thus conserves the redox energy in a proton gradient. This subunit may bind ubiquinone. The sequence is that of NADH-quinone oxidoreductase subunit H from Brucella abortus (strain 2308).